Reading from the N-terminus, the 253-residue chain is Methionine aminopeptidase (253 aa).

Position 78 (H78) interacts with substrate. Residues D95, D106, and H169 each coordinate a divalent metal cation. Substrate is bound at residue H176. Residues E206 and E237 each contribute to the a divalent metal cation site.

It belongs to the peptidase M24A family. Methionine aminopeptidase type 1 subfamily. In terms of assembly, monomer. Co(2+) serves as cofactor. The cofactor is Zn(2+). It depends on Mn(2+) as a cofactor. Requires Fe(2+) as cofactor.

It carries out the reaction Release of N-terminal amino acids, preferentially methionine, from peptides and arylamides.. Removes the N-terminal methionine from nascent proteins. The N-terminal methionine is often cleaved when the second residue in the primary sequence is small and uncharged (Met-Ala-, Cys, Gly, Pro, Ser, Thr, or Val). Requires deformylation of the N(alpha)-formylated initiator methionine before it can be hydrolyzed. This is Methionine aminopeptidase from Helicobacter pylori (strain ATCC 700392 / 26695) (Campylobacter pylori).